The primary structure comprises 167 residues: Plastocyanin major isoform, chloroplastic (167 aa).

The N-terminal 52 residues, 1 to 52 (MASVTSATVAIPSFTGLKASTIKSSATVRIQTAAVASPKLTVKSSLKNFGVA), are a transit peptide targeting the chloroplast. The transit peptide at 53-68 (AVAAAASIALAGNAMA) directs the protein to the thylakoid. Residues 69 to 167 (IEVLLGGGDG…AGMVGKVTVN (99 aa)) form the Plastocyanin-like domain. His105, Cys152, His155, and Met160 together coordinate Cu cation.

This sequence belongs to the plastocyanin family. The cofactor is Cu(2+).

It localises to the plastid. The protein resides in the chloroplast thylakoid membrane. Functionally, participates in electron transfer between P700 and the cytochrome b6-f complex in photosystem I. Seems to be the major plastocyanin in Arabidopsis. In Arabidopsis thaliana (Mouse-ear cress), this protein is Plastocyanin major isoform, chloroplastic (DRT112).